A 395-amino-acid polypeptide reads, in one-letter code: Acetate kinase (395 aa).

N8 contributes to the Mg(2+) binding site. K15 is an ATP binding site. R89 provides a ligand contact to substrate. The active-site Proton donor/acceptor is the D146. ATP contacts are provided by residues 206–210, 281–283, and 329–333; these read HLGNG, DLR, and GIGEN. E382 contacts Mg(2+).

Belongs to the acetokinase family. As to quaternary structure, homodimer. Requires Mg(2+) as cofactor. Mn(2+) is required as a cofactor.

The protein localises to the cytoplasm. It carries out the reaction acetate + ATP = acetyl phosphate + ADP. Its pathway is metabolic intermediate biosynthesis; acetyl-CoA biosynthesis; acetyl-CoA from acetate: step 1/2. In terms of biological role, catalyzes the formation of acetyl phosphate from acetate and ATP. Can also catalyze the reverse reaction. The protein is Acetate kinase of Shouchella clausii (strain KSM-K16) (Alkalihalobacillus clausii).